The sequence spans 34 residues: Potassium channel toxin alpha-KTx 6.13 (34 aa).

Cystine bridges form between cysteine 3/cysteine 24, cysteine 9/cysteine 29, cysteine 13/cysteine 31, and cysteine 19/cysteine 34. Cysteine amide is present on cysteine 34.

Belongs to the short scorpion toxin superfamily. Potassium channel inhibitor family. Alpha-KTx 06 subfamily. In terms of tissue distribution, expressed by the venom gland.

Its subcellular location is the secreted. In terms of biological role, antagonist of Kv1/KCNA potassium channels. Shows a weak interaction with muscle-type nicotinic acetylcholine receptors (nAChR), since it inhibits alpha-bungarotoxin binding to both muscle-type nAChR from T.californica (IC(50)=490 nM). This suggests it probably weakly inhibits nAChR. This Heterometrus spinifer (Asia giant forest scorpion) protein is Potassium channel toxin alpha-KTx 6.13.